Consider the following 384-residue polypeptide: Glucans biosynthesis protein C (384 aa).

10 consecutive transmembrane segments (helical) span residues 17 to 37 (AWLM…THSW), 54 to 74 (FIHA…SYML), 91 to 111 (VGIP…ILLQ), 140 to 160 (LWFL…FTWF), 173 to 193 (AISL…YAAI), 212 to 232 (FIVM…LAFI), 240 to 260 (FTTP…AYLL), 274 to 294 (TESV…FSLG), 311 to 331 (ASLF…AYIT), and 338 to 358 (LIGF…LYEI).

Belongs to the acyltransferase 3 family. OpgC subfamily.

The protein resides in the cell membrane. The protein operates within glycan metabolism; osmoregulated periplasmic glucan (OPG) biosynthesis. Functionally, necessary for the succinyl substitution of periplasmic glucans. Could catalyze the transfer of succinyl residues from the cytoplasmic side of the membrane to the nascent glucan backbones on the periplasmic side of the membrane. In Salmonella heidelberg (strain SL476), this protein is Glucans biosynthesis protein C.